We begin with the raw amino-acid sequence, 576 residues long: RNA-binding post-transcriptional regulator cip2 (576 aa).

The region spanning 232–310 is the RRM domain; that stretch reads TAIVIKNIPF…RRLRVEWKRQ (79 aa). Residues 355–420 enclose the R3H domain; that stretch reads DPAILNVYSH…AKQVVITMPS (66 aa).

As to quaternary structure, interacts with csx1. In terms of processing, phosphorylated by sty1.

It is found in the cytoplasm. In terms of biological role, regulates global gene expression after oxidative stress. Interacts and stabilizes mRNAs and may regulate their transition between different cytoplasmic components after oxidative stress. This Schizosaccharomyces pombe (strain 972 / ATCC 24843) (Fission yeast) protein is RNA-binding post-transcriptional regulator cip2 (cip2).